We begin with the raw amino-acid sequence, 626 residues long: Beta-galactosidase large subunit (626 aa).

Residue Glu-466 is the Proton donor of the active site. Catalysis depends on Glu-534, which acts as the Nucleophile.

This sequence belongs to the glycosyl hydrolase 2 family. Heterodimer of a large (LacL) and a small subunit (LacM).

The catalysed reaction is Hydrolysis of terminal non-reducing beta-D-galactose residues in beta-D-galactosides.. Its function is as follows. Component of a beta-galactosidase that displays activity with the artificial chromogenic substrate o-nitrophenyl-beta-D-galactopyranoside (ONPG). In Leuconostoc lactis, this protein is Beta-galactosidase large subunit.